Reading from the N-terminus, the 388-residue chain is Queuine tRNA-ribosyltransferase (388 aa).

The active-site Proton acceptor is the D91. Substrate-binding positions include D91–Y95, D145, Q190, and G217. Residues G248 to D254 are RNA binding. D267 acts as the Nucleophile in catalysis. Residues T272–R276 form an RNA binding; important for wobble base 34 recognition region. C305, C307, C310, and H336 together coordinate Zn(2+).

The protein belongs to the queuine tRNA-ribosyltransferase family. In terms of assembly, homodimer. Within each dimer, one monomer is responsible for RNA recognition and catalysis, while the other monomer binds to the replacement base PreQ1. It depends on Zn(2+) as a cofactor.

It carries out the reaction 7-aminomethyl-7-carbaguanine + guanosine(34) in tRNA = 7-aminomethyl-7-carbaguanosine(34) in tRNA + guanine. It functions in the pathway tRNA modification; tRNA-queuosine biosynthesis. Functionally, catalyzes the base-exchange of a guanine (G) residue with the queuine precursor 7-aminomethyl-7-deazaguanine (PreQ1) at position 34 (anticodon wobble position) in tRNAs with GU(N) anticodons (tRNA-Asp, -Asn, -His and -Tyr). Catalysis occurs through a double-displacement mechanism. The nucleophile active site attacks the C1' of nucleotide 34 to detach the guanine base from the RNA, forming a covalent enzyme-RNA intermediate. The proton acceptor active site deprotonates the incoming PreQ1, allowing a nucleophilic attack on the C1' of the ribose to form the product. After dissociation, two additional enzymatic reactions on the tRNA convert PreQ1 to queuine (Q), resulting in the hypermodified nucleoside queuosine (7-(((4,5-cis-dihydroxy-2-cyclopenten-1-yl)amino)methyl)-7-deazaguanosine). The polypeptide is Queuine tRNA-ribosyltransferase (Dictyoglomus turgidum (strain DSM 6724 / Z-1310)).